A 313-amino-acid polypeptide reads, in one-letter code: MLDKIIRIATRQSPLALWQAHYVQHLLQANHPGLQIELVPMVTRGDIILDTPLAKVGGKGLFVKELELALLDGRADIAVHSMKDVPIAFPEGLGLVTICEREDPRDAFVSSHYTHLDDLPAGSVVGTSSLRRQCQLRERRPDLIIRDLRGNVGTRLAKLDNGDYQAIILAVAGLKRLGLENRIRYAMSAEESLPAVGQGAVGIECRLDDGHTRQLLAPLNHRHTELRVCAERAMNIRLEGGCQVPIGSYAELEGDTLWLRALVGAPDGSQMIRGERRGPAAEAEQMGIELADELLSRGAREILAAVYLDNPAR.

Cysteine 242 carries the post-translational modification S-(dipyrrolylmethanemethyl)cysteine.

The protein belongs to the HMBS family. In terms of assembly, monomer. Dipyrromethane is required as a cofactor.

The catalysed reaction is 4 porphobilinogen + H2O = hydroxymethylbilane + 4 NH4(+). The protein operates within porphyrin-containing compound metabolism; protoporphyrin-IX biosynthesis; coproporphyrinogen-III from 5-aminolevulinate: step 2/4. Functionally, tetrapolymerization of the monopyrrole PBG into the hydroxymethylbilane pre-uroporphyrinogen in several discrete steps. The polypeptide is Porphobilinogen deaminase (Yersinia pseudotuberculosis serotype O:3 (strain YPIII)).